A 175-amino-acid chain; its full sequence is UPF0178 protein GOX1710 (175 aa).

Belongs to the UPF0178 family.

In Gluconobacter oxydans (strain 621H) (Gluconobacter suboxydans), this protein is UPF0178 protein GOX1710.